The chain runs to 378 residues: Queuine tRNA-ribosyltransferase (378 aa).

D89 (proton acceptor) is an active-site residue. Substrate contacts are provided by residues 89–93 (DSGGF), D143, Q187, and G214. The RNA binding stretch occupies residues 245 to 251 (GVGKPED). The Nucleophile role is filled by D264. The RNA binding; important for wobble base 34 recognition stretch occupies residues 269-273 (TRNAR). Zn(2+) is bound by residues C302, C304, C307, and H333.

This sequence belongs to the queuine tRNA-ribosyltransferase family. As to quaternary structure, homodimer. Within each dimer, one monomer is responsible for RNA recognition and catalysis, while the other monomer binds to the replacement base PreQ1. Zn(2+) is required as a cofactor.

The enzyme catalyses 7-aminomethyl-7-carbaguanine + guanosine(34) in tRNA = 7-aminomethyl-7-carbaguanosine(34) in tRNA + guanine. It functions in the pathway tRNA modification; tRNA-queuosine biosynthesis. Catalyzes the base-exchange of a guanine (G) residue with the queuine precursor 7-aminomethyl-7-deazaguanine (PreQ1) at position 34 (anticodon wobble position) in tRNAs with GU(N) anticodons (tRNA-Asp, -Asn, -His and -Tyr). Catalysis occurs through a double-displacement mechanism. The nucleophile active site attacks the C1' of nucleotide 34 to detach the guanine base from the RNA, forming a covalent enzyme-RNA intermediate. The proton acceptor active site deprotonates the incoming PreQ1, allowing a nucleophilic attack on the C1' of the ribose to form the product. After dissociation, two additional enzymatic reactions on the tRNA convert PreQ1 to queuine (Q), resulting in the hypermodified nucleoside queuosine (7-(((4,5-cis-dihydroxy-2-cyclopenten-1-yl)amino)methyl)-7-deazaguanosine). This Yersinia enterocolitica serotype O:8 / biotype 1B (strain NCTC 13174 / 8081) protein is Queuine tRNA-ribosyltransferase.